The chain runs to 377 residues: Chaperone protein DnaJ (377 aa).

The J domain maps to 5–70; it reads DYYEILGVSK…EKRSAYDQYG (66 aa). The CR-type zinc finger occupies 131 to 209; sequence GVVREICVPT…CRGSGRIERT (79 aa). 8 residues coordinate Zn(2+): Cys144, Cys147, Cys161, Cys164, Cys183, Cys186, Cys197, and Cys200. 4 CXXCXGXG motif repeats span residues 144–151, 161–168, 183–190, and 197–204; these read CLQCRGSG, CVTCHGHG, CPSCNGHG, and CNKCRGSG.

The protein belongs to the DnaJ family. Homodimer. Zn(2+) serves as cofactor.

The protein resides in the cytoplasm. In terms of biological role, participates actively in the response to hyperosmotic and heat shock by preventing the aggregation of stress-denatured proteins and by disaggregating proteins, also in an autonomous, DnaK-independent fashion. Unfolded proteins bind initially to DnaJ; upon interaction with the DnaJ-bound protein, DnaK hydrolyzes its bound ATP, resulting in the formation of a stable complex. GrpE releases ADP from DnaK; ATP binding to DnaK triggers the release of the substrate protein, thus completing the reaction cycle. Several rounds of ATP-dependent interactions between DnaJ, DnaK and GrpE are required for fully efficient folding. Also involved, together with DnaK and GrpE, in the DNA replication of plasmids through activation of initiation proteins. This chain is Chaperone protein DnaJ, found in Blochmanniella floridana.